The sequence spans 341 residues: Glucokinase (341 aa).

18-23 (GDIGGT) is an ATP binding site.

The protein belongs to the bacterial glucokinase family.

Its subcellular location is the cytoplasm. It carries out the reaction D-glucose + ATP = D-glucose 6-phosphate + ADP + H(+). The chain is Glucokinase from Rhizobium leguminosarum bv. trifolii (strain WSM2304).